The chain runs to 685 residues: MSDSNQGNNQQNYQQYSQNGNQQQGNNRYQGYQAYNAQAQPAGGYYQNYQGYSGYQQGGYQQYNPDAGYQQQYNPQGGYQQYNPQGGYQQQFNPQGGRGNYKNFNYNNNLQGYQAGFQPQSQGMSLNDFQKQQKQAAPKPKKTLKLVSSSGIKLANATKKVGTKPAESDKKEEEKSAETKEPTKEPTKVEEPVKKEEKPVQTEEKTEEKSELPKVEDLKISESTHNTNNANVTSADALIKEQEEEVDDEVVNDMFGGKDHVSLIFMGHVDAGKSTMGGNLLYLTGSVDKRTIEKYEREAKDAGRQGWYLSWVMDTNKEERNDGKTIEVGKAYFETEKRRYTILDAPGHKMYVSEMIGGASQADVGVLVISARKGEYETGFERGGQTREHALLAKTQGVNKMVVVVNKMDDPTVNWSKERYDQCVSNVSNFLRAIGYNIKTDVVFMPVSGYSGANLKDHVDPKECPWYTGPTLLEYLDTMNHVDRHINAPFMLPIAAKMKDLGTIVEGKIESGHIKKGQSTLLMPNKTAVEIQNIYNETENEVDMAMCGEQVKLRIKGVEEEDISPGFVLTSPKNPIKSVTKFVAQIAIVELKSIIAAGFSCVMHVHTAIEEVHIVKLLHKLEKGTNRKSKKPPAFAKKGMKVIAVLETEAPVCVETYQDYPQLGRFTLRDQGTTIAIGKIVKIAE.

Disordered stretches follow at residues 1–34, 63–99, and 112–234; these read MSDS…GYQA, YNPD…GGRG, and GYQA…NVTS. Residue Ser2 is modified to N-acetylserine. The interaction with PAB1 stretch occupies residues 2–239; that stretch reads SDSNQGNNQQ…ANVTSADALI (238 aa). Positions 5 to 135 are prion domain (PrD); that stretch reads NQGNNQQNYQ…LNDFQKQQKQ (131 aa). The span at 117–129 shows a compositional bias: polar residues; that stretch reads FQPQSQGMSLNDF. The segment at 139–249 is charged; the sequence is KPKKTLKLVS…KEQEEEVDDE (111 aa). Over residues 166-222 the composition is skewed to basic and acidic residues; the sequence is AESDKKEEEKSAETKEPTKEPTKVEEPVKKEEKPVQTEEKTEEKSELPKVEDLKISE. The segment covering 223–234 has biased composition (polar residues); sequence STHNTNNANVTS. The tr-type G domain maps to 258-484; that stretch reads KDHVSLIFMG…YLDTMNHVDR (227 aa). Positions 267 to 274 are G1; it reads GHVDAGKS. A GTP-binding site is contributed by 267 to 274; the sequence is GHVDAGKS. A G2 region spans residues 323–327; that stretch reads GKTIE. The tract at residues 344 to 347 is G3; sequence DAPG. Residues 406 to 409 and 449 to 450 each bind GTP; these read NKMD and GY. The G4 stretch occupies residues 406–409; it reads NKMD. Residues 448 to 450 form a G5 region; the sequence is SGY. Position 571 is a phosphoserine (Ser571).

Belongs to the TRAFAC class translation factor GTPase superfamily. Classic translation factor GTPase family. ERF3 subfamily. As to quaternary structure, heterodimer of two subunits, one of which binds GTP. Interacts with polyadenylate-binding protein PAB1, and TPA1.

It is found in the cytoplasm. The enzyme catalyses GTP + H2O = GDP + phosphate + H(+). In terms of biological role, GTPase component of the eRF1-eRF3-GTP ternary complex, a ternary complex that mediates translation termination in response to the termination codons UAA, UAG and UGA. SUP35/eRF3 mediates SUP45/eRF1 delivery to stop codons: The eRF1-eRF3-GTP complex binds to a stop codon in the ribosomal A-site. GTP hydrolysis by SUP35/eRF3 induces a conformational change that leads to its dissociation, permitting SUP45/eRF1 to accommodate fully in the A-site. Recruited by polyadenylate-binding protein PAB1 to poly(A)-tails of mRNAs. Interaction with PAB1 is also required for regulation of normal mRNA decay through translation termination-coupled poly(A) shortening. This Saccharomyces cerevisiae (strain ATCC 204508 / S288c) (Baker's yeast) protein is Eukaryotic peptide chain release factor GTP-binding subunit (SUP35).